The following is a 482-amino-acid chain: MSSRCKRCLNSFSEMNLKLKIAIIVIGFIHVSIAIARKSTDGVAHHRLVRLHTILITSTAMLSASYYIWKRVNFAITKLFKTLKSENELPIANSNESESDFAMNTLLPSPNPVGNRRLRLICFQDIAQALMMLFLFLSHIAMFFYYIFLGPEPNVIAITSLSFIAAYAHILIFLLIADVLFYSTKLIHSKVAPNSVHTYLKENRCYHILLALILGFIFMFAGLYTTHTDPIVRSASIPMKRFQSNSGNVSIALLSDVHIGPSVGRTRIAKIVELTNALKPDIIAIAGDLADGLVRDFHGAAEPLCNLKAPGGVYFATGNHEYMHGNVTEWFWFLENCNITVLHNLNKHITVNGQKLCVAGADDLYALRSNVPGHGMDLRKALGTCNSDSTNILLAHQPNAAKIVLSDSELSKKVNLILSGHTHGGQMYPFVPIVHLANAFVRGQYYDKSTDTYVYVSAGVNYFGPPIKMFGSCEIIFITMTQ.

4 helical membrane-spanning segments follow: residues 15 to 35 (MNLK…SIAI), 129 to 149 (ALMM…YIFL), 156 to 176 (IAIT…FLLI), and 205 to 225 (CYHI…GLYT). Residues aspartate 256, histidine 258, aspartate 288, asparagine 319, histidine 421, and histidine 423 each contribute to the a divalent metal cation site.

Belongs to the metallophosphoesterase superfamily. LOC643853 family.

The protein localises to the membrane. The polypeptide is Putative metallophosphoesterase F40B5.2 (Caenorhabditis elegans).